The primary structure comprises 357 residues: Protein RecA (357 aa).

Gly73–Thr80 contacts ATP.

The protein belongs to the RecA family.

The protein resides in the cytoplasm. Functionally, can catalyze the hydrolysis of ATP in the presence of single-stranded DNA, the ATP-dependent uptake of single-stranded DNA by duplex DNA, and the ATP-dependent hybridization of homologous single-stranded DNAs. It interacts with LexA causing its activation and leading to its autocatalytic cleavage. The protein is Protein RecA of Nitratidesulfovibrio vulgaris (strain ATCC 29579 / DSM 644 / CCUG 34227 / NCIMB 8303 / VKM B-1760 / Hildenborough) (Desulfovibrio vulgaris).